The sequence spans 478 residues: Trigger factor (478 aa).

Residues 1 to 41 are disordered; sequence MAELADAPDLGSGARKGVRVRLPPPAPHKNGGKNESRGSGQ. In terms of domain architecture, PPIase FKBP-type spans 197 to 279; the sequence is GDMLVVEYEV…IKEIKKKVLP (83 aa). The segment covering 455–472 has biased composition (basic and acidic residues); the sequence is VEQKQEEEKKEEKEEVKN. The disordered stretch occupies residues 455–478; that stretch reads VEQKQEEEKKEEKEEVKNESQGNT.

It belongs to the FKBP-type PPIase family. Tig subfamily.

It is found in the cytoplasm. The enzyme catalyses [protein]-peptidylproline (omega=180) = [protein]-peptidylproline (omega=0). Its function is as follows. Involved in protein export. Acts as a chaperone by maintaining the newly synthesized protein in an open conformation. Functions as a peptidyl-prolyl cis-trans isomerase. This is Trigger factor from Aquifex aeolicus (strain VF5).